The following is a 595-amino-acid chain: Quinoprotein alcohol dehydrogenase PedH (595 aa).

The first 27 residues, 1–27, serve as a signal peptide directing secretion; that stretch reads MTRSPRRPLFAVSLVLSAMLLAGAAHA. Residue Q87 participates in pyrroloquinoline quinone binding. The cysteines at positions 131 and 132 are disulfide-linked. 4 residues coordinate pyrroloquinoline quinone: R137, S181, G197, and G198. E199 lines the Pr(3+) pocket. W263 provides a ligand contact to pyrroloquinoline quinone. Residues N281, D323, and D325 each contribute to the Pr(3+) site. The active-site Proton acceptor is the D323. R350, N417, W493, and A557 together coordinate pyrroloquinoline quinone.

This sequence belongs to the bacterial PQQ dehydrogenase family. Pr(3+) is required as a cofactor. It depends on Nd(3+) as a cofactor. The cofactor is La(3+). Requires Ce(3+) as cofactor. Sm(3+) serves as cofactor. Pyrroloquinoline quinone is required as a cofactor. In terms of processing, the disulfide ring formed between the two adjacent cysteine residues Cys-131 and Cys-132 is essential for efficient electron transfer at pH 7 from PedH to its natural electron acceptor cytochrome c550.

It localises to the periplasm. The enzyme catalyses a primary alcohol + 2 Fe(III)-[cytochrome c] = an aldehyde + 2 Fe(II)-[cytochrome c] + 2 H(+). It catalyses the reaction ethanol + 2 Fe(III)-[cytochrome c] = acetaldehyde + 2 Fe(II)-[cytochrome c] + 2 H(+). It carries out the reaction butan-1-ol + 2 Fe(III)-[cytochrome c] = butanal + 2 Fe(II)-[cytochrome c] + 2 H(+). The catalysed reaction is butan-2-ol + 2 Fe(III)-[cytochrome c] = butan-2-one + 2 Fe(II)-[cytochrome c] + 2 H(+). The enzyme catalyses 2-phenylethanol + 2 Fe(III)-[cytochrome c] = 2-phenylacetaldehyde + 2 Fe(II)-[cytochrome c] + 2 H(+). It catalyses the reaction octan-1-ol + 2 Fe(III)-[cytochrome c] = octanal + 2 Fe(II)-[cytochrome c] + 2 H(+). It carries out the reaction hexan-1-ol + 2 Fe(III)-[cytochrome c] = hexanal + 2 Fe(II)-[cytochrome c] + 2 H(+). The catalysed reaction is cinnamyl alcohol + 2 Fe(III)-[cytochrome c] = cinnamaldehyde + 2 Fe(II)-[cytochrome c] + 2 H(+). The enzyme catalyses farnesol + 2 Fe(III)-[cytochrome c] = farnesal + 2 Fe(II)-[cytochrome c] + 2 H(+). It catalyses the reaction an aldehyde + 2 Fe(III)-[cytochrome c] + H2O = a carboxylate + 2 Fe(II)-[cytochrome c] + 3 H(+). It carries out the reaction acetaldehyde + 2 Fe(III)-[cytochrome c] + H2O = 2 Fe(II)-[cytochrome c] + acetate + 3 H(+). The catalysed reaction is butanal + 2 Fe(III)-[cytochrome c] + H2O = butanoate + 2 Fe(II)-[cytochrome c] + 3 H(+). The enzyme catalyses hexanal + 2 Fe(III)-[cytochrome c] + H2O = hexanoate + 2 Fe(II)-[cytochrome c] + 3 H(+). It catalyses the reaction octanal + 2 Fe(III)-[cytochrome c] + H2O = octanoate + 2 Fe(II)-[cytochrome c] + 3 H(+). Functionally, alcohol dehydrogenase that catalyzes the oxidation of a range of substrates, including linear and aromatic primary and secondary alcohols, as well as aldehydes, but only in the presence of lanthanides, allowing bacterial growth with a variety of volatile organic compounds (VOCs) as carbon and energy sources. Is also involved in the transcriptional regulation of pedE and pedH, most likely acting as a lanthanide sensory module. Uses a specific inducible cytochrome c550, encoded by the adjacent gene in the locus, as electron acceptor. The sequence is that of Quinoprotein alcohol dehydrogenase PedH from Pseudomonas putida (strain ATCC 47054 / DSM 6125 / CFBP 8728 / NCIMB 11950 / KT2440).